Here is a 166-residue protein sequence, read N- to C-terminus: MPKEEVEVLIEGGKADPGPPLGPALGPLGVNIQEVVEEINRKTKDFKGMEVPVKIIVDTETREFEVKVGSPPTSAIIKSELGIDKGAHEPRHETVGDLSMEQVIKIAKMKFDDLLSYDLKTAAKEILGTCGSMGVTVEGKDPKEVQKEIDEGKWDDLFEKYEEEEE.

This sequence belongs to the universal ribosomal protein uL11 family. In terms of assembly, part of the ribosomal stalk of the 50S ribosomal subunit. Interacts with L10 and the large rRNA to form the base of the stalk. L10 forms an elongated spine to which L12 dimers bind in a sequential fashion forming a multimeric L10(L12)X complex.

Forms part of the ribosomal stalk which helps the ribosome interact with GTP-bound translation factors. The protein is Large ribosomal subunit protein uL11 of Methanopyrus kandleri (strain AV19 / DSM 6324 / JCM 9639 / NBRC 100938).